The following is a 334-amino-acid chain: Ferredoxin--NADP reductase (334 aa).

FAD contacts are provided by aspartate 32, glutamine 40, tyrosine 45, valine 85, phenylalanine 120, aspartate 287, and threonine 327.

Belongs to the ferredoxin--NADP reductase type 2 family. In terms of assembly, homodimer. It depends on FAD as a cofactor.

It catalyses the reaction 2 reduced [2Fe-2S]-[ferredoxin] + NADP(+) + H(+) = 2 oxidized [2Fe-2S]-[ferredoxin] + NADPH. This chain is Ferredoxin--NADP reductase, found in Wolbachia pipientis subsp. Culex pipiens (strain wPip).